A 62-amino-acid chain; its full sequence is Cytotoxin homolog (62 aa).

Cystine bridges form between C3–C22, C15–C40, C44–C55, and C56–C61.

This sequence belongs to the three-finger toxin family. Short-chain subfamily. Orphan group XV sub-subfamily. In terms of tissue distribution, expressed by the venom gland.

The protein resides in the secreted. It localises to the target cell membrane. Functionally, has low cytotoxic activity. The polypeptide is Cytotoxin homolog (Naja kaouthia (Monocled cobra)).